The primary structure comprises 262 residues: Ribosomal RNA small subunit methyltransferase A (262 aa).

Residues H11, I13, G38, E60, D85, and N105 each coordinate S-adenosyl-L-methionine.

Belongs to the class I-like SAM-binding methyltransferase superfamily. rRNA adenine N(6)-methyltransferase family. RsmA subfamily.

The protein localises to the cytoplasm. The catalysed reaction is adenosine(1518)/adenosine(1519) in 16S rRNA + 4 S-adenosyl-L-methionine = N(6)-dimethyladenosine(1518)/N(6)-dimethyladenosine(1519) in 16S rRNA + 4 S-adenosyl-L-homocysteine + 4 H(+). Its function is as follows. Specifically dimethylates two adjacent adenosines (A1518 and A1519) in the loop of a conserved hairpin near the 3'-end of 16S rRNA in the 30S particle. May play a critical role in biogenesis of 30S subunits. This chain is Ribosomal RNA small subunit methyltransferase A, found in Neorickettsia sennetsu (strain ATCC VR-367 / Miyayama) (Ehrlichia sennetsu).